A 232-amino-acid chain; its full sequence is Clarin-1 (232 aa).

The chain crosses the membrane as a helical span at residues 8 to 28 (IIFCMAGVFSFACALGVVTAL). The N-linked (GlcNAc...) asparagine glycan is linked to N48. 2 helical membrane-spanning segments follow: residues 101–121 (IILFSMILVVLTMVGTAFFMY) and 135–155 (LGLYLVSFISGSCGCLVMILF). N184 carries an N-linked (GlcNAc...) asparagine glycan. A helical membrane pass occupies residues 186–206 (TTSFWVVFICFFVHFLNGLLI).

It belongs to the clarin family.

It is found in the cell membrane. In terms of biological role, may have a role in the excitatory ribbon synapse junctions between hair cells and cochlear ganglion cells and presumably also in analogous synapses within the retina. This Rattus norvegicus (Rat) protein is Clarin-1 (Clrn1).